Here is a 965-residue protein sequence, read N- to C-terminus: Probable ion channel POLLUX (965 aa).

Over residues 1-11 the composition is skewed to low complexity; sequence MAESDGGEASP. Disordered stretches follow at residues 1–76 and 108–158; these read MAES…APRG and GPHA…KSLA. The span at 32-42 shows a compositional bias: polar residues; sequence LTKSRTISGSA. 2 stretches are compositionally biased toward low complexity: residues 52–66 and 118–149; these read SNSSSSILVRRSSTA and RSQQQTPTTTAAAAADSRSPTPAAPPQTASVS. Helical transmembrane passes span 187 to 207, 251 to 271, 317 to 337, and 369 to 389; these read LSPYLVLMLVVTVISFSLAIW, ADWNLASCSRMLVFAIPVFLV, LALLLATIILIASGGIALYVV, and IVSVSISSGGMLVFATMLGLV. 2 RCK N-terminal domains span residues 410–551 and 670–818; these read VNHI…ETVV and PEKI…DKSI.

This sequence belongs to the castor/pollux (TC 1.A.1.23) family. Expressed in roots, leaves, stems and panicles.

The protein localises to the nucleus membrane. Functionally, required for mycorrhizal symbiosis. The polypeptide is Probable ion channel POLLUX (Oryza sativa subsp. japonica (Rice)).